A 64-amino-acid polypeptide reads, in one-letter code: Large ribosomal subunit protein uL29 (64 aa).

It belongs to the universal ribosomal protein uL29 family.

This Levilactobacillus brevis (strain ATCC 367 / BCRC 12310 / CIP 105137 / JCM 1170 / LMG 11437 / NCIMB 947 / NCTC 947) (Lactobacillus brevis) protein is Large ribosomal subunit protein uL29.